The chain runs to 74 residues: Large ribosomal subunit protein bL31 (74 aa).

4 residues coordinate Zn(2+): Cys-16, Cys-18, Cys-38, and Cys-41.

The protein belongs to the bacterial ribosomal protein bL31 family. Type A subfamily. Part of the 50S ribosomal subunit. The cofactor is Zn(2+).

Binds the 23S rRNA. The protein is Large ribosomal subunit protein bL31 of Mycobacteroides abscessus (strain ATCC 19977 / DSM 44196 / CCUG 20993 / CIP 104536 / JCM 13569 / NCTC 13031 / TMC 1543 / L948) (Mycobacterium abscessus).